Reading from the N-terminus, the 283-residue chain is Phosphatidylglycerol--prolipoprotein diacylglyceryl transferase (283 aa).

A run of 3 helical transmembrane segments spans residues 17 to 37 (LAVR…TFLG), 56 to 76 (FLTW…VLFY), and 92 to 112 (WEGG…IWLF). A 1,2-diacyl-sn-glycero-3-phospho-(1'-sn-glycerol) is bound at residue Arg139. The next 2 helical transmembrane spans lie at 222-242 (GQTA…AEFA) and 255-275 (GLSM…VGFV).

This sequence belongs to the Lgt family.

It is found in the cell inner membrane. It carries out the reaction L-cysteinyl-[prolipoprotein] + a 1,2-diacyl-sn-glycero-3-phospho-(1'-sn-glycerol) = an S-1,2-diacyl-sn-glyceryl-L-cysteinyl-[prolipoprotein] + sn-glycerol 1-phosphate + H(+). Its pathway is protein modification; lipoprotein biosynthesis (diacylglyceryl transfer). In terms of biological role, catalyzes the transfer of the diacylglyceryl group from phosphatidylglycerol to the sulfhydryl group of the N-terminal cysteine of a prolipoprotein, the first step in the formation of mature lipoproteins. This Neisseria gonorrhoeae (strain ATCC 700825 / FA 1090) protein is Phosphatidylglycerol--prolipoprotein diacylglyceryl transferase.